A 396-amino-acid chain; its full sequence is Cytochrome b (396 aa).

4 consecutive transmembrane segments (helical) span residues 32 to 52, 76 to 98, 113 to 133, and 179 to 199; these read FGSLLGVNLVILIISGLTLAM, WLLRYIHANGASFFFIWVYLHIG, LWSIGVVIFILMMATAFIGYV, and FFSLHYLLPFILAALVVMHLL. The heme b site is built by His-82 and His-96. His-183 and His-197 together coordinate heme b. His-202 contributes to the a ubiquinone binding site. The next 4 membrane-spanning stretches (helical) occupy residues 225-245, 289-309, 321-341, and 348-368; these read FTSKDLVGFVWMAILLSIFVF, LGGVIAMFGALLILFPLALIH, LLNLLFWIFVFNFFVLLWVGA, and YILIGQISTIIYFLYFVILMI.

Belongs to the cytochrome b family. In terms of assembly, fungal cytochrome b-c1 complex contains 10 subunits; 3 respiratory subunits, 2 core proteins and 5 low-molecular weight proteins. Cytochrome b-c1 complex is a homodimer. It depends on heme b as a cofactor.

It is found in the mitochondrion inner membrane. Its function is as follows. Component of the ubiquinol-cytochrome c reductase complex (complex III or cytochrome b-c1 complex) that is part of the mitochondrial respiratory chain. The b-c1 complex mediates electron transfer from ubiquinol to cytochrome c. Contributes to the generation of a proton gradient across the mitochondrial membrane that is then used for ATP synthesis. The sequence is that of Cytochrome b (cob) from Spizellomyces punctatus.